The sequence spans 218 residues: Uracil-DNA glycosylase (218 aa).

The active-site Proton acceptor is aspartate 59.

It belongs to the uracil-DNA glycosylase (UDG) superfamily. UNG family.

The protein localises to the cytoplasm. The catalysed reaction is Hydrolyzes single-stranded DNA or mismatched double-stranded DNA and polynucleotides, releasing free uracil.. In terms of biological role, excises uracil residues from the DNA which can arise as a result of misincorporation of dUMP residues by DNA polymerase or due to deamination of cytosine. The sequence is that of Uracil-DNA glycosylase from Staphylococcus aureus (strain bovine RF122 / ET3-1).